We begin with the raw amino-acid sequence, 578 residues long: Thiol:disulfide interchange protein DsbD (578 aa).

An N-terminal signal peptide occupies residues 1-24 (MAQRFITLILLLCSILLAPHSAQA). Intrachain disulfides connect Cys-134-Cys-140 and Cys-195-Cys-317. The next 9 helical transmembrane spans lie at 183–203 (ALLI…YPLI), 219–239 (ILLL…LLGL), 256–276 (YVLI…FGLY), 297–317 (GGSL…CSPC), 318–338 (TTAP…MLAG), 339–359 (GGTL…VTLF), 370–390 (WMQY…VFLL), 397–417 (VWGL…AFIL), and 421–441 (AHSG…LIAA). Residues 438–578 (LIAARPLQDW…FLQHLQNLPR (141 aa)) enclose the Thioredoxin domain. The cysteines at positions 493 and 496 are disulfide-linked.

Belongs to the thioredoxin family. DsbD subfamily.

The protein localises to the cell inner membrane. It carries out the reaction [protein]-dithiol + NAD(+) = [protein]-disulfide + NADH + H(+). It catalyses the reaction [protein]-dithiol + NADP(+) = [protein]-disulfide + NADPH + H(+). In terms of biological role, required to facilitate the formation of correct disulfide bonds in some periplasmic proteins and for the assembly of the periplasmic c-type cytochromes. Acts by transferring electrons from cytoplasmic thioredoxin to the periplasm. This transfer involves a cascade of disulfide bond formation and reduction steps. This chain is Thiol:disulfide interchange protein DsbD, found in Yersinia enterocolitica serotype O:8 / biotype 1B (strain NCTC 13174 / 8081).